A 300-amino-acid chain; its full sequence is Lysenin-related protein 3 (300 aa).

The interval 12 to 35 (EEIEVDVVAVWKEGYVYENRGDTS) is N-terminal cap domain. Residues 36-109 (VEQKITMTKG…SQVIEHTVTI (74 aa)) are beta-hairpin domain. An N-terminal cap domain region spans residues 110–158 (PPTSKFTRWKLNADVGGTDIEYMYLIDEVTPISVTQTIPQVIRSRAKIL). Positions 159–299 (VGRQIHLGTT…EDKWILEVVN (141 aa)) are C-terminal receptor-binding domain. Residues Lys187, Ser229, Tyr235, and Tyr284 each coordinate an N-(acyl)-sphingosylphosphocholine. The cysteines at positions 274 and 285 are disulfide-linked.

Belongs to the lysenin family. Binds to sphingomyelin as a monomer by using its C-terminal domain. Forms a nonamer when sphingomyelin/LRP-3 ratio is lower than ca 500. Oligomerization, but not binding, is influenced by the fluidity of sphingomyelin. Expressed by coelomocytes.

The protein resides in the secreted. The protein localises to the target cell membrane. Its function is as follows. Pore-forming toxin that specifically binds sphingomyelin in the plasma membrane of various cells. Has antibacterial and hemolytic activity. This is Lysenin-related protein 3 from Eisenia fetida (Red wiggler worm).